Reading from the N-terminus, the 579-residue chain is Pentatricopeptide repeat-containing protein At2g15690, mitochondrial (579 aa).

The transit peptide at 1 to 49 (MSSLMAIRCARTQNIVTIGSLLQLRSSFPRLSSQFHFSGTLNSIPIKHL) directs the protein to the mitochondrion. Polar residues-rich tracts occupy residues 56 to 71 (NDYH…SQHQ) and 78 to 103 (SFDS…TQHG). The disordered stretch occupies residues 56-208 (NDYHQNPQSG…QMNEVAPPPS (153 aa)). Low complexity-rich tracts occupy residues 117-136 (GGQR…QMSQ) and 148-199 (RPQY…SPNQ). PPR repeat units follow at residues 235–269 (DREC…KFRG), 270–300 (DPKL…MVDK), 301–335 (DMDS…GLKP), 336–371 (NEET…GISP), and 372–402 (KTEH…LPFE). The segment at 485-579 (GVVYVPDTRF…DGKCSCGDYW (95 aa)) is type DYW motif.

The protein belongs to the PPR family. PCMP-H subfamily.

The protein resides in the mitochondrion. The polypeptide is Pentatricopeptide repeat-containing protein At2g15690, mitochondrial (PCMP-H66) (Arabidopsis thaliana (Mouse-ear cress)).